The following is a 639-amino-acid chain: Protein argonaute (639 aa).

The N-terminal domain stretch occupies residues 1-100 (MYLNLYKIDI…YIKKLFLDND (100 aa)). The linker L1 stretch occupies residues 101 to 153 (FYFKKGNNFISNSEVFSLDSNENVNAHLTYKIKIHNISNEYYLSILPKFTFLS). The tract at residues 154–209 (KEPALESAIKSGYLYNIKSGKSFPYISGLDGILKIDIGNNQIVEVAYPENYLFNFT) is PAZ domain. The interval 210 to 292 (TRDAEKYGFS…KYSFYKNEQP (83 aa)) is linker L2. The segment at 293–424 (LKAIFFFSSK…YVYKMGNFIP (132 aa)) is mid domain. Positions 425-639 (ECKPFILKKM…DYEWKLYIPY (215 aa)) are PIWI domain. Catalysis depends on residues Asp446, Glu482, Asp516, and Asn624. Asp446 contacts Mn(2+). Mn(2+)-binding residues include Asp516 and Asn624.

It belongs to the argonaute family. Long pAgo subfamily. Mn(2+) serves as cofactor.

Its subcellular location is the cytoplasm. In terms of biological role, an RNA-guided ssDNA endonuclease that may play a role in defense against invading mobile genetic elements. Uses short 5'-OH-ssRNA sequences as guides (gRNA) to bind complementary target DNA (tDNA) or target RNA resulting in target cleavage. The cleavage site is 10 nucleotides (nt) downstream of the target residue base-paired with the 5'-end of the gRNA. Reaction rates are fastest on 5'-OH-gRNA:tDNA followed by 5'-OH-gRNA:target RNA. gRNA between 17-21 nt supports equivalent rates of cleavage, has no preferred 5'-nt. Has weak activity on tDNA with 5'-phospho-gRNA, yielding products 1-2 nt longer. Unlike other characterized prokaryotic Ago proteins symmetric mismatches centered around the cleavage site reduce cleavage efficiency. The protein is Protein argonaute of Marinitoga piezophila (strain DSM 14283 / JCM 11233 / KA3).